We begin with the raw amino-acid sequence, 177 residues long: Large ribosomal subunit protein uL6 (177 aa).

The protein belongs to the universal ribosomal protein uL6 family. Part of the 50S ribosomal subunit.

This protein binds to the 23S rRNA, and is important in its secondary structure. It is located near the subunit interface in the base of the L7/L12 stalk, and near the tRNA binding site of the peptidyltransferase center. The polypeptide is Large ribosomal subunit protein uL6 (Erwinia tasmaniensis (strain DSM 17950 / CFBP 7177 / CIP 109463 / NCPPB 4357 / Et1/99)).